The following is a 443-amino-acid chain: Phosphoglucosamine mutase (443 aa).

The active-site Phosphoserine intermediate is Ser101. Mg(2+) is bound by residues Ser101, Asp239, Asp241, and Asp243. Position 101 is a phosphoserine (Ser101).

The protein belongs to the phosphohexose mutase family. Requires Mg(2+) as cofactor. Post-translationally, activated by phosphorylation.

It catalyses the reaction alpha-D-glucosamine 1-phosphate = D-glucosamine 6-phosphate. In terms of biological role, catalyzes the conversion of glucosamine-6-phosphate to glucosamine-1-phosphate. The protein is Phosphoglucosamine mutase of Francisella tularensis subsp. holarctica (strain FTNF002-00 / FTA).